The primary structure comprises 142 residues: Hemoglobin subunit alpha (142 aa).

Residues 2–142 form the Globin domain; it reads VLSPADKTNV…VSTVLVSKYR (141 aa). Phosphoserine is present on Ser-4. Lys-8 is modified (N6-succinyllysine). A Phosphothreonine modification is found at Thr-9. Lys-12 is modified (N6-succinyllysine). Lys-17 is modified (N6-acetyllysine; alternate). The residue at position 17 (Lys-17) is an N6-succinyllysine; alternate. At Tyr-25 the chain carries Phosphotyrosine. Ser-36 carries the phosphoserine modification. An N6-succinyllysine modification is found at Lys-41. Ser-50 carries the phosphoserine modification. His-59 serves as a coordination point for O2. His-88 serves as a coordination point for heme b. Ser-103 is modified (phosphoserine). Thr-109 bears the Phosphothreonine mark. Phosphoserine is present on residues Ser-125 and Ser-132. Thr-135 carries the post-translational modification Phosphothreonine. Ser-139 carries the post-translational modification Phosphoserine.

The protein belongs to the globin family. In terms of assembly, heterotetramer of two alpha chains and two beta chains. As to expression, red blood cells.

Functionally, involved in oxygen transport from the lung to the various peripheral tissues. Its function is as follows. Hemopressin acts as an antagonist peptide of the cannabinoid receptor CNR1. Hemopressin-binding efficiently blocks cannabinoid receptor CNR1 and subsequent signaling. In Antrozous pallidus (Pallid bat), this protein is Hemoglobin subunit alpha (HBA).